The following is a 92-amino-acid chain: MARVTVEDAVNKIGNRFDMILVAARRARQIAVQGKEPMVDEMNDKPTVVALREIELGLVTSNTLDADERQTVREREAAEIAAVAAIAEGRVL.

This sequence belongs to the RNA polymerase subunit omega family. In terms of assembly, the RNAP catalytic core consists of 2 alpha, 1 beta, 1 beta' and 1 omega subunit. When a sigma factor is associated with the core the holoenzyme is formed, which can initiate transcription.

The enzyme catalyses RNA(n) + a ribonucleoside 5'-triphosphate = RNA(n+1) + diphosphate. Its function is as follows. Promotes RNA polymerase assembly. Latches the N- and C-terminal regions of the beta' subunit thereby facilitating its interaction with the beta and alpha subunits. This Shewanella frigidimarina (strain NCIMB 400) protein is DNA-directed RNA polymerase subunit omega.